A 234-amino-acid chain; its full sequence is MSILHATILTVFPEMFPGTLGHSLAGQALNKNIWSYDVINIRDFGLTKHKNIDDEAYGGGNGLIMRPDVLGSSIDHALALNPNAEMYYPSPRGRVFTQSFAKEMLKNKNLIFLCGRYEGIDERVIEEYNVKEISVGDYILSGGEIPTLTILDCLIRLLPGVLMNQNTLSSESFEEDGEFKGGLECSLYTRPEIWRDRAVPSVLLSGNHRLINEWKKEQSHMITKLRRPELLKDL.

Residues glycine 115 and 135 to 140 contribute to the S-adenosyl-L-methionine site; that span reads VGDYIL.

The protein belongs to the RNA methyltransferase TrmD family. As to quaternary structure, homodimer.

The protein resides in the cytoplasm. The enzyme catalyses guanosine(37) in tRNA + S-adenosyl-L-methionine = N(1)-methylguanosine(37) in tRNA + S-adenosyl-L-homocysteine + H(+). Its function is as follows. Specifically methylates guanosine-37 in various tRNAs. This is tRNA (guanine-N(1)-)-methyltransferase from Rickettsia africae (strain ESF-5).